Reading from the N-terminus, the 445-residue chain is Homoserine O-succinyltransferase (445 aa).

Residues 45 to 411 enclose the AB hydrolase-1 domain; that stretch reads NAVLICHALS…APHGHDSFLF (367 aa). The Nucleophile role is filled by Ser-153. Arg-223 is a binding site for substrate. Active-site residues include Asp-373 and His-406. Asp-407 provides a ligand contact to substrate.

The protein belongs to the AB hydrolase superfamily. MetX family. In terms of assembly, homodimer.

It is found in the cytoplasm. It carries out the reaction L-homoserine + succinyl-CoA = O-succinyl-L-homoserine + CoA. It participates in amino-acid biosynthesis; L-methionine biosynthesis via de novo pathway; O-succinyl-L-homoserine from L-homoserine: step 1/1. Transfers a succinyl group from succinyl-CoA to L-homoserine, forming succinyl-L-homoserine. This is Homoserine O-succinyltransferase from Psychrobacter arcticus (strain DSM 17307 / VKM B-2377 / 273-4).